Consider the following 435-residue polypeptide: Adenylosuccinate synthetase (435 aa).

Residues 17-23 and 45-47 contribute to the GTP site; these read GDEGKGK and GHT. The active-site Proton acceptor is Asp-18. Mg(2+) contacts are provided by Asp-18 and Gly-45. Residues 18-21, 43-46, Thr-134, Arg-148, Gln-229, Thr-244, and Arg-308 contribute to the IMP site; these read DEGK and NAGH. Catalysis depends on His-46, which acts as the Proton donor. Substrate is bound at residue 304 to 310; sequence SVTGRPR. GTP is bound by residues Arg-310, 336-338, and 418-420; these read KLD and STG.

Belongs to the adenylosuccinate synthetase family. As to quaternary structure, homodimer. Mg(2+) is required as a cofactor.

The protein localises to the cytoplasm. It carries out the reaction IMP + L-aspartate + GTP = N(6)-(1,2-dicarboxyethyl)-AMP + GDP + phosphate + 2 H(+). The protein operates within purine metabolism; AMP biosynthesis via de novo pathway; AMP from IMP: step 1/2. In terms of biological role, plays an important role in the de novo pathway of purine nucleotide biosynthesis. Catalyzes the first committed step in the biosynthesis of AMP from IMP. The sequence is that of Adenylosuccinate synthetase from Bordetella pertussis (strain Tohama I / ATCC BAA-589 / NCTC 13251).